Reading from the N-terminus, the 87-residue chain is Exodeoxyribonuclease 7 small subunit (87 aa).

It belongs to the XseB family. As to quaternary structure, heterooligomer composed of large and small subunits.

The protein resides in the cytoplasm. The catalysed reaction is Exonucleolytic cleavage in either 5'- to 3'- or 3'- to 5'-direction to yield nucleoside 5'-phosphates.. Functionally, bidirectionally degrades single-stranded DNA into large acid-insoluble oligonucleotides, which are then degraded further into small acid-soluble oligonucleotides. In Xanthomonas campestris pv. campestris (strain 8004), this protein is Exodeoxyribonuclease 7 small subunit.